The following is a 98-amino-acid chain: ATP-dependent Clp protease adapter protein ClpS (98 aa).

The protein belongs to the ClpS family. As to quaternary structure, binds to the N-terminal domain of the chaperone ClpA.

In terms of biological role, involved in the modulation of the specificity of the ClpAP-mediated ATP-dependent protein degradation. The chain is ATP-dependent Clp protease adapter protein ClpS from Synechocystis sp. (strain ATCC 27184 / PCC 6803 / Kazusa).